Here is a 445-residue protein sequence, read N- to C-terminus: Beclin-1 (445 aa).

Positions Thr-103–Ser-122 match the BH3 motif. A coiled-coil region spans residues Asp-137–Val-264. Residues Asp-240–Lys-445 form an evolutionary conserved domain (ECD) region. The segment at Trp-420 to Lys-445 is required for membrane-association.

It belongs to the beclin family. As to quaternary structure, component of the PI3K (PI3KC3/PI3K-III/class III phosphatidylinositol 3-kinase) complex. Post-translationally, may be proteolytically processed by caspases; the C-terminal fragment(s) may induce apoptosis.

The protein localises to the cytoplasm. Its subcellular location is the golgi apparatus. It is found in the trans-Golgi network membrane. It localises to the endosome membrane. The protein resides in the endoplasmic reticulum membrane. The protein localises to the mitochondrion membrane. Its subcellular location is the cytoplasmic vesicle. It is found in the autophagosome. Functionally, plays a central role in autophagy. Acts as core subunit of different PI3K complex forms that mediate formation of phosphatidylinositol 3-phosphate and are believed to play a role in multiple membrane trafficking pathways: PI3KC3-C1 is involved in initiation of autophagosomes and PI3KC3-C2 in maturation of autophagosomes and endocytosis. Involved in regulation of degradative endocytic trafficking and required for the abscission step in cytokinesis, probably in the context of PI3KC3-C2. Essential for the formation of PI3KC3-C2 but not PI3KC3-C1 PI3K complex forms. Involved in endocytosis including endosome formation in neuronal cells. This chain is Beclin-1 (becn1), found in Xenopus tropicalis (Western clawed frog).